The primary structure comprises 608 residues: ATP-citrate synthase beta chain protein 1 (608 aa).

ATP contacts are provided by residues 214 to 234 and 265 to 291; these read ILRF…ELGG and FKSE…KNQA. Mg(2+) is bound at residue glutamate 231. The active-site Tele-phosphohistidine intermediate is the histidine 273. 292 to 302 is a CoA binding site; that stretch reads LQDAGATVPTS.

It belongs to the succinate/malate CoA ligase alpha subunit family. In terms of assembly, heterooctamer of 4 alpha and 4 beta chains.

It localises to the cytoplasm. It is found in the cytosol. The catalysed reaction is oxaloacetate + acetyl-CoA + ADP + phosphate = citrate + ATP + CoA. In terms of biological role, ATP citrate-lyase is the primary enzyme responsible for the synthesis of cytosolic acetyl-CoA, used for the elongation of fatty acids and biosynthesis of isoprenoids, flavonoids and malonated derivatives. May supply substrate to the cytosolic acetyl-CoA carboxylase, which generates the malonyl-CoA used for the synthesis of a multitude of compounds, including very long chain fatty acids and flavonoids. Required for normal growth and development and elongation of C18 fatty acids to C20 to C24 fatty acids in seeds. In contrast to all known animal ACL enzymes having a homomeric structure, plant ACLs are composed of alpha and beta chains. This is ATP-citrate synthase beta chain protein 1 (ACLB-1) from Arabidopsis thaliana (Mouse-ear cress).